Consider the following 367-residue polypeptide: Mitogen-activated protein kinase 12 (367 aa).

The 285-residue stretch at 27–311 folds into the Protein kinase domain; sequence YQDLQPVGSG…AAEALAHPYF (285 aa). ATP contacts are provided by residues 33 to 41 and K56; that span reads VGSGAYGAV. Catalysis depends on D153, which acts as the Proton acceptor. Phosphothreonine; by MAP2K3 and MAP2K6 is present on T183. The TXY signature appears at 183 to 185; sequence TGY. Residue Y185 is modified to Phosphotyrosine; by MAP2K3 and MAP2K6.

Belongs to the protein kinase superfamily. CMGC Ser/Thr protein kinase family. MAP kinase subfamily. As to quaternary structure, monomer. Interacts with the PDZ domain of the syntrophin SNTA1. Interacts with LIN7C, SCRIB, SYNJ2BP and SH3BP5. Interacts with PTPN4; this interaction induces the activation of PTPN4 phosphatase activity. Mg(2+) serves as cofactor. In terms of processing, dually phosphorylated on Thr-183 and Tyr-185 by MAP2K3/MKK3 and MAP2K6/MKK6, which activates the enzyme. Ubiquitinated. Ubiquitination leads to degradation by the proteasome pathway. As to expression, highly expressed in skeletal muscle, lung and testes and also in the heart and thymus of both adult and neonatal rats.

The protein localises to the cytoplasm. Its subcellular location is the nucleus. It localises to the mitochondrion. The catalysed reaction is L-seryl-[protein] + ATP = O-phospho-L-seryl-[protein] + ADP + H(+). It catalyses the reaction L-threonyl-[protein] + ATP = O-phospho-L-threonyl-[protein] + ADP + H(+). With respect to regulation, activated by phosphorylation on threonine and tyrosine. MAP2K3/MKK3 and MAP2K6/MKK6 are both essential for the activation of MAPK12 induced by environmental stress, whereas MAP2K6/MKK6 is the major MAPK12 activator in response to TNF-alpha. Serine/threonine kinase which acts as an essential component of the MAP kinase signal transduction pathway. MAPK12 is one of the four p38 MAPKs which play an important role in the cascades of cellular responses evoked by extracellular stimuli such as pro-inflammatory cytokines or physical stress leading to direct activation of transcription factors such as ELK1 and ATF2. Accordingly, p38 MAPKs phosphorylate a broad range of proteins and it has been estimated that they may have approximately 200 to 300 substrates each. Some of the targets are downstream kinases such as MAPKAPK2, which are activated through phosphorylation and further phosphorylate additional targets. Plays a role in myoblast differentiation and also in the down-regulation of cyclin D1 in response to hypoxia in adrenal cells suggesting MAPK12 may inhibit cell proliferation while promoting differentiation. Phosphorylates DLG1. Following osmotic shock, MAPK12 in the cell nucleus increases its association with nuclear DLG1, thereby causing dissociation of DLG1-SFPQ complexes. This function is independent of its catalytic activity and could affect mRNA processing and/or gene transcription to aid cell adaptation to osmolarity changes in the environment. Regulates UV-induced checkpoint signaling and repair of UV-induced DNA damage and G2 arrest after gamma-radiation exposure. MAPK12 is involved in the regulation of SLC2A1 expression and basal glucose uptake in L6 myotubes; and negatively regulates SLC2A4 expression and contraction-mediated glucose uptake in adult skeletal muscle. C-Jun (JUN) phosphorylation is stimulated by MAPK14 and inhibited by MAPK12, leading to a distinct AP-1 regulation. MAPK12 is required for the normal kinetochore localization of PLK1, prevents chromosomal instability and supports mitotic cell viability. MAPK12-signaling is also positively regulating the expansion of transient amplifying myogenic precursor cells during muscle growth and regeneration. The sequence is that of Mitogen-activated protein kinase 12 (Mapk12) from Rattus norvegicus (Rat).